A 132-amino-acid polypeptide reads, in one-letter code: Fatty acid-binding protein, brain (132 aa).

An N-acetylvaline modification is found at Val-2. 127 to 129 (RHY) lines the a fatty acid pocket.

This sequence belongs to the calycin superfamily. Fatty-acid binding protein (FABP) family. In terms of tissue distribution, expressed in brain and other neural tissues.

The protein resides in the cytoplasm. B-FABP could be involved in the transport of a so far unknown hydrophobic ligand with potential morphogenic activity during CNS development. It is required for the establishment of the radial glial fiber system in developing brain, a system that is necessary for the migration of immature neurons to establish cortical layers. This chain is Fatty acid-binding protein, brain (FABP7), found in Homo sapiens (Human).